A 180-amino-acid chain; its full sequence is Early nodulin-16 (180 aa).

The N-terminal stretch at 1-22 (MASSSPILLMIIFSMWLLISHS) is a signal peptide. A Phytocyanin domain is found at 25 to 129 (TDYLIGDSHN…GLKLAVVVQN (105 aa)). Asparagine 67 carries an N-linked (GlcNAc...) asparagine glycan. The cysteines at positions 83 and 117 are disulfide-linked. An N-linked (GlcNAc...) asparagine glycan is attached at asparagine 152. A lipid anchor (GPI-anchor amidated serine) is attached at serine 154. Positions 155-180 (GNKGGAAGLGFIMWLGVSLVMMMFLI) are cleaved as a propeptide — removed in mature form.

The protein belongs to the early nodulin-like (ENODL) family. Expressed in developing nodules upon symbiosis with Sinorhizobium meliloti.

It localises to the symbiosome. The protein localises to the cell membrane. Functionally, may act as a carbohydrate transporter. This Medicago truncatula (Barrel medic) protein is Early nodulin-16.